Here is a 450-residue protein sequence, read N- to C-terminus: Ig mu chain C region (450 aa).

In Canis lupus familiaris (Dog), this protein is Ig mu chain C region.